A 178-amino-acid chain; its full sequence is Translation initiation factor IF-3 (178 aa).

Belongs to the IF-3 family. As to quaternary structure, monomer.

The protein localises to the cytoplasm. IF-3 binds to the 30S ribosomal subunit and shifts the equilibrium between 70S ribosomes and their 50S and 30S subunits in favor of the free subunits, thus enhancing the availability of 30S subunits on which protein synthesis initiation begins. This chain is Translation initiation factor IF-3, found in Ureaplasma parvum serovar 3 (strain ATCC 700970).